A 316-amino-acid chain; its full sequence is Acetyl-coenzyme A carboxylase carboxyl transferase subunit alpha (316 aa).

Positions 40–293 (LEKRSRDALR…GDLIAKTMKE (254 aa)) constitute a CoA carboxyltransferase C-terminal domain.

This sequence belongs to the AccA family. As to quaternary structure, acetyl-CoA carboxylase is a heterohexamer composed of biotin carboxyl carrier protein (AccB), biotin carboxylase (AccC) and two subunits each of ACCase subunit alpha (AccA) and ACCase subunit beta (AccD).

Its subcellular location is the cytoplasm. It carries out the reaction N(6)-carboxybiotinyl-L-lysyl-[protein] + acetyl-CoA = N(6)-biotinyl-L-lysyl-[protein] + malonyl-CoA. It participates in lipid metabolism; malonyl-CoA biosynthesis; malonyl-CoA from acetyl-CoA: step 1/1. Its function is as follows. Component of the acetyl coenzyme A carboxylase (ACC) complex. First, biotin carboxylase catalyzes the carboxylation of biotin on its carrier protein (BCCP) and then the CO(2) group is transferred by the carboxyltransferase to acetyl-CoA to form malonyl-CoA. The polypeptide is Acetyl-coenzyme A carboxylase carboxyl transferase subunit alpha (Mesorhizobium japonicum (strain LMG 29417 / CECT 9101 / MAFF 303099) (Mesorhizobium loti (strain MAFF 303099))).